Here is a 95-residue protein sequence, read N- to C-terminus: Large ribosomal subunit protein bL25 (95 aa).

This sequence belongs to the bacterial ribosomal protein bL25 family. Part of the 50S ribosomal subunit; part of the 5S rRNA/L5/L18/L25 subcomplex. Contacts the 5S rRNA. Binds to the 5S rRNA independently of L5 and L18.

Functionally, this is one of the proteins that binds to the 5S RNA in the ribosome where it forms part of the central protuberance. This chain is Large ribosomal subunit protein bL25, found in Shewanella pealeana (strain ATCC 700345 / ANG-SQ1).